The chain runs to 401 residues: Acetate kinase (401 aa).

Residue Asn-7 coordinates Mg(2+). Residue Lys-14 coordinates ATP. Arg-91 lines the substrate pocket. The Proton donor/acceptor role is filled by Asp-148. ATP contacts are provided by residues 208–212, 283–285, and 332–336; these read HLGNG, DFR, and GVGEN. Mg(2+) is bound at residue Glu-385.

This sequence belongs to the acetokinase family. In terms of assembly, homodimer. Requires Mg(2+) as cofactor. The cofactor is Mn(2+).

The protein resides in the cytoplasm. It catalyses the reaction acetate + ATP = acetyl phosphate + ADP. The protein operates within metabolic intermediate biosynthesis; acetyl-CoA biosynthesis; acetyl-CoA from acetate: step 1/2. Functionally, catalyzes the formation of acetyl phosphate from acetate and ATP. Can also catalyze the reverse reaction. This is Acetate kinase from Thermoanaerobacter pseudethanolicus (strain ATCC 33223 / 39E) (Clostridium thermohydrosulfuricum).